Reading from the N-terminus, the 100-residue chain is MVPYEYYVALSGLLMVLGFIGVIVRKNIIAMLISTELMLNAVNVAFVAFDMKLHDVVGQVFVFFILTIAAAEAAIGLGLIMAIYRMKKDVDVEKLTELKG.

Helical transmembrane passes span 4–24, 28–48, and 60–80; these read YEYYVALSGLLMVLGFIGVIV, IIAMLISTELMLNAVNVAFVA, and VFVFFILTIAAAEAAIGLGLI.

It belongs to the complex I subunit 4L family. As to quaternary structure, NDH-1 is composed of 14 different subunits. Subunits NuoA, H, J, K, L, M, N constitute the membrane sector of the complex.

It localises to the cell inner membrane. It catalyses the reaction a quinone + NADH + 5 H(+)(in) = a quinol + NAD(+) + 4 H(+)(out). NDH-1 shuttles electrons from NADH, via FMN and iron-sulfur (Fe-S) centers, to quinones in the respiratory chain. The immediate electron acceptor for the enzyme in this species is believed to be ubiquinone. Couples the redox reaction to proton translocation (for every two electrons transferred, four hydrogen ions are translocated across the cytoplasmic membrane), and thus conserves the redox energy in a proton gradient. This Sulfurihydrogenibium azorense (strain DSM 15241 / OCM 825 / Az-Fu1) protein is NADH-quinone oxidoreductase subunit K.